The following is a 385-amino-acid chain: Alkanesulfonate monooxygenase (385 aa).

It belongs to the SsuD family.

It carries out the reaction an alkanesulfonate + FMNH2 + O2 = an aldehyde + FMN + sulfite + H2O + 2 H(+). In terms of biological role, catalyzes the desulfonation of aliphatic sulfonates. This chain is Alkanesulfonate monooxygenase, found in Paraburkholderia phymatum (strain DSM 17167 / CIP 108236 / LMG 21445 / STM815) (Burkholderia phymatum).